Reading from the N-terminus, the 227-residue chain is Cytidylate kinase (227 aa).

Residue 11 to 19 (GPSGAGKGT) coordinates ATP.

Belongs to the cytidylate kinase family. Type 1 subfamily.

It is found in the cytoplasm. The catalysed reaction is CMP + ATP = CDP + ADP. It carries out the reaction dCMP + ATP = dCDP + ADP. The sequence is that of Cytidylate kinase from Pasteurella multocida (strain Pm70).